A 333-amino-acid polypeptide reads, in one-letter code: GTP 3',8-cyclase (333 aa).

Residues 7 to 221 (KFGRVHDYIR…FEACDAIGFE (215 aa)) enclose the Radical SAM core domain. R16 provides a ligand contact to GTP. [4Fe-4S] cluster contacts are provided by C23 and C27. Y29 serves as a coordination point for S-adenosyl-L-methionine. C30 serves as a coordination point for [4Fe-4S] cluster. A GTP-binding site is contributed by R66. G70 lines the S-adenosyl-L-methionine pocket. T97 serves as a coordination point for GTP. S121 serves as a coordination point for S-adenosyl-L-methionine. Position 158 (K158) interacts with GTP. M192 lines the S-adenosyl-L-methionine pocket. Positions 257 and 260 each coordinate [4Fe-4S] cluster. Residue 262–264 (RLR) participates in GTP binding. C274 contributes to the [4Fe-4S] cluster binding site.

This sequence belongs to the radical SAM superfamily. MoaA family. As to quaternary structure, monomer and homodimer. [4Fe-4S] cluster is required as a cofactor.

It carries out the reaction GTP + AH2 + S-adenosyl-L-methionine = (8S)-3',8-cyclo-7,8-dihydroguanosine 5'-triphosphate + 5'-deoxyadenosine + L-methionine + A + H(+). The protein operates within cofactor biosynthesis; molybdopterin biosynthesis. Catalyzes the cyclization of GTP to (8S)-3',8-cyclo-7,8-dihydroguanosine 5'-triphosphate. In Listeria welshimeri serovar 6b (strain ATCC 35897 / DSM 20650 / CCUG 15529 / CIP 8149 / NCTC 11857 / SLCC 5334 / V8), this protein is GTP 3',8-cyclase.